A 381-amino-acid polypeptide reads, in one-letter code: Spermidine/putrescine import ATP-binding protein PotA (381 aa).

Residues V22–I252 form the ABC transporter domain. An ATP-binding site is contributed by G54–T61.

Belongs to the ABC transporter superfamily. Spermidine/putrescine importer (TC 3.A.1.11.1) family. The complex is composed of two ATP-binding proteins (PotA), two transmembrane proteins (PotB and PotC) and a solute-binding protein (PotD).

Its subcellular location is the cell inner membrane. It catalyses the reaction ATP + H2O + polyamine-[polyamine-binding protein]Side 1 = ADP + phosphate + polyamineSide 2 + [polyamine-binding protein]Side 1.. Its function is as follows. Part of the ABC transporter complex PotABCD involved in spermidine/putrescine import. Responsible for energy coupling to the transport system. This Trichormus variabilis (strain ATCC 29413 / PCC 7937) (Anabaena variabilis) protein is Spermidine/putrescine import ATP-binding protein PotA.